The following is a 100-amino-acid chain: Urease subunit gamma (100 aa).

The protein belongs to the urease gamma subunit family. Heterotrimer of UreA (gamma), UreB (beta) and UreC (alpha) subunits. Three heterotrimers associate to form the active enzyme.

The protein resides in the cytoplasm. The catalysed reaction is urea + 2 H2O + H(+) = hydrogencarbonate + 2 NH4(+). It functions in the pathway nitrogen metabolism; urea degradation; CO(2) and NH(3) from urea (urease route): step 1/1. The polypeptide is Urease subunit gamma (Paraburkholderia phytofirmans (strain DSM 17436 / LMG 22146 / PsJN) (Burkholderia phytofirmans)).